The primary structure comprises 429 residues: Fumarylacetoacetase (429 aa).

Residue Asp139 participates in Ca(2+) binding. His146 (proton acceptor) is an active-site residue. Arg155 is a substrate binding site. Ca(2+) contacts are provided by Glu212, Glu214, and Asp246. Residue Asp246 coordinates Mg(2+). Substrate is bound at residue Gln253. The Mg(2+) site is built by Lys266 and Thr270. Thr363 is a binding site for substrate.

This sequence belongs to the FAH family. Ca(2+) is required as a cofactor. Mg(2+) serves as cofactor.

It carries out the reaction 4-fumarylacetoacetate + H2O = acetoacetate + fumarate + H(+). It participates in amino-acid degradation; L-phenylalanine degradation; acetoacetate and fumarate from L-phenylalanine: step 6/6. Converts fumarylacetoacetate to acetoacetate and fumarate. Involved in tyrosine catabolic pathway. Catalyzes the final step in the tyrosine degradation pathway. The protein is Fumarylacetoacetase of Oryza sativa subsp. japonica (Rice).